We begin with the raw amino-acid sequence, 174 residues long: Ferredoxin-2, mitochondrial (174 aa).

Residues 1–43 (MAASMARGVSARVLLRAAGGSWGPRAGHAAVTSRTFGTTGERR) constitute a mitochondrion transit peptide. The segment at 26–52 (AGHAAVTSRTFGTTGERRAGEEAADSP) is disordered. Positions 59-161 (VNVVFVDRSG…GVEFALPKIT (103 aa)) constitute a 2Fe-2S ferredoxin-type domain. 4 residues coordinate [2Fe-2S] cluster: Cys96, Cys102, Cys105, and Cys142.

Belongs to the adrenodoxin/putidaredoxin family. As to quaternary structure, component of the mitochondrial core iron-sulfur cluster (ISC) complex composed of NFS1, LYRM4, NDUFAB1, ISCU, FXN, and FDX2; this complex is a heterohexamer containing two copies of each monomer. Form a heterodimer complex with NFS1. Interacts (in both their reduced and oxidized states) with the cysteine desulfurase (NFS1:LYRM4) complex; this interaction stimulates cysteine desulfurase activity, and serves as a reductant for Fe-S cluster assembly. Requires [2Fe-2S] cluster as cofactor.

It localises to the mitochondrion. The protein localises to the mitochondrion matrix. In terms of biological role, electron donor, of the core iron-sulfur cluster (ISC) assembly complex, that acts to reduce the persulfide into sulfide during [2Fe-2S] clusters assembly on the scaffolding protein ISCU. The core iron-sulfur cluster (ISC) assembly complex is involved in the de novo synthesis of a [2Fe-2S] cluster, the first step of the mitochondrial iron-sulfur protein biogenesis. This process is initiated by the cysteine desulfurase complex (NFS1:LYRM4:NDUFAB1) that produces persulfide which is delivered on the scaffold protein ISCU in a FXN-dependent manner. Then this complex is stabilized by FDX2 which provides reducing equivalents to accomplish the [2Fe-2S] cluster assembly. Finally, the [2Fe-2S] cluster is transferred from ISCU to chaperone proteins, including HSCB, HSPA9 and GLRX5. Essential for coenzyme Q biosynthesis: together with FDXR, transfers the electrons required for the hydroxylation reaction performed by COQ6. The sequence is that of Ferredoxin-2, mitochondrial from Mus musculus (Mouse).